A 213-amino-acid polypeptide reads, in one-letter code: Ion-translocating oxidoreductase complex subunit E (213 aa).

Helical transmembrane passes span 25–45 (TFGL…VENG), 46–66 (IGMA…VSAI), 77–97 (PVEI…MEAF), 100–120 (DLYT…IVIG), 135–155 (IIDA…IGGI), and 181–201 (AMFM…MTIV).

It belongs to the NqrDE/RnfAE family. As to quaternary structure, the Rnf complex is probably composed of eight subunits, including RnfA, RnfB, RnfC, RnfD, RnfE and RnfG.

It is found in the cell membrane. Part of a membrane-bound complex that couples electron transfer with translocation of ions across the membrane. Catalyzes Na(+) transport, most probably coupled to electron transfer from reduced ferredoxin to methanophenazine and heterodisulfide reductase. Involved in heterodisulfide reduction during methanogenesis from acetate. The protein is Ion-translocating oxidoreductase complex subunit E of Methanosarcina acetivorans (strain ATCC 35395 / DSM 2834 / JCM 12185 / C2A).